The sequence spans 194 residues: Der GTPase-activating protein YihI (194 aa).

The tract at residues 1 to 87 is disordered; the sequence is MSRQKKSRNI…RDPRLGSRKK (87 aa). Residues 37–48 are compositionally biased toward basic and acidic residues; sequence TRYELDAKARED.

Belongs to the YihI family. Interacts with Der.

Its function is as follows. A GTPase-activating protein (GAP) that modifies Der/EngA GTPase function. May play a role in ribosome biogenesis. This chain is Der GTPase-activating protein YihI, found in Mannheimia succiniciproducens (strain KCTC 0769BP / MBEL55E).